We begin with the raw amino-acid sequence, 552 residues long: DNA ligase (552 aa).

Glu229 provides a ligand contact to ATP. The active-site N6-AMP-lysine intermediate is the Lys231. Positions 236 and 283 each coordinate ATP. Mg(2+)-binding residues include Glu283 and Glu377. Lys382 and Lys397 together coordinate ATP.

This sequence belongs to the ATP-dependent DNA ligase family. Interacts with host TOP2A and TOP2B. The cofactor is Mg(2+).

The protein localises to the host cytoplasm. It carries out the reaction ATP + (deoxyribonucleotide)n-3'-hydroxyl + 5'-phospho-(deoxyribonucleotide)m = (deoxyribonucleotide)n+m + AMP + diphosphate.. Its function is as follows. DNA ligase that seals nicks in double-stranded DNA during DNA replication, DNA recombination and DNA repair. Recruits cellular topoisomerase II to sites of viral replication and assembly. This Vaccinia virus (strain Copenhagen) (VACV) protein is DNA ligase (OPG180).